The chain runs to 124 residues: Small ribosomal subunit protein uS12 (124 aa).

Asp-89 carries the 3-methylthioaspartic acid modification.

It belongs to the universal ribosomal protein uS12 family. In terms of assembly, part of the 30S ribosomal subunit. Contacts proteins S8 and S17. May interact with IF1 in the 30S initiation complex.

With S4 and S5 plays an important role in translational accuracy. In terms of biological role, interacts with and stabilizes bases of the 16S rRNA that are involved in tRNA selection in the A site and with the mRNA backbone. Located at the interface of the 30S and 50S subunits, it traverses the body of the 30S subunit contacting proteins on the other side and probably holding the rRNA structure together. The combined cluster of proteins S8, S12 and S17 appears to hold together the shoulder and platform of the 30S subunit. This is Small ribosomal subunit protein uS12 from Hydrogenovibrio crunogenus (strain DSM 25203 / XCL-2) (Thiomicrospira crunogena).